A 265-amino-acid polypeptide reads, in one-letter code: Hydroxyethylthiazole kinase (265 aa).

Methionine 50 is a binding site for substrate. Residues arginine 125 and threonine 171 each coordinate ATP. Glycine 198 is a binding site for substrate.

The protein belongs to the Thz kinase family. The cofactor is Mg(2+).

The enzyme catalyses 5-(2-hydroxyethyl)-4-methylthiazole + ATP = 4-methyl-5-(2-phosphooxyethyl)-thiazole + ADP + H(+). It functions in the pathway cofactor biosynthesis; thiamine diphosphate biosynthesis; 4-methyl-5-(2-phosphoethyl)-thiazole from 5-(2-hydroxyethyl)-4-methylthiazole: step 1/1. In terms of biological role, catalyzes the phosphorylation of the hydroxyl group of 4-methyl-5-beta-hydroxyethylthiazole (THZ). This is Hydroxyethylthiazole kinase from Salmonella paratyphi A (strain ATCC 9150 / SARB42).